The following is a 204-amino-acid chain: MELRLWFLFGLTVTSAAGPVPRPQPGDAGRSGVPRAPSATKETMAMVATRGPSPRSSGQEQEPGPFGELAAKGGPVRYRARRCTCFTYKDKECVYYCHLDIIWINTPERTVPYGLSNHRGSVRGRRSAGPSPQSSQPSRGTLRCACAESQDRACVYFCTRTLAARGASRTPETPDKEAGKPAGRATGGLHPRRLKSRTDKARRL.

An N-terminal signal peptide occupies residues 1–17 (MELRLWFLFGLTVTSAA). The interval 18-71 (GPVPRPQPGDAGRSGVPRAPSATKETMAMVATRGPSPRSSGQEQEPGPFGELAA) is disordered. The propeptide occupies 18–80 (GPVPRPQPGD…AKGGPVRYRA (63 aa)). 2 disulfide bridges follow: Cys-83–Cys-97 and Cys-85–Cys-93. A propeptide spanning residues 104–204 (INTPERTVPY…KSRTDKARRL (101 aa)) is cleaved from the precursor. The segment at 115–140 (LSNHRGSVRGRRSAGPSPQSSQPSRG) is disordered. The span at 127 to 140 (SAGPSPQSSQPSRG) shows a compositional bias: low complexity. The interval 144–158 (CACAESQDRACVYFC) is endothelin-like. Residues 166–204 (GASRTPETPDKEAGKPAGRATGGLHPRRLKSRTDKARRL) are disordered.

It belongs to the endothelin/sarafotoxin family.

The protein resides in the secreted. Endothelins are endothelium-derived vasoconstrictor peptides. The polypeptide is Endothelin-3 (EDN3) (Sus scrofa (Pig)).